The sequence spans 42 residues: Serine protease inhibitor 8 (42 aa).

This sequence belongs to the protease inhibitor I3 (leguminous Kunitz-type inhibitor) family. Cortex of potato tuber.

Its function is as follows. Potent inhibitor of animal pancreatic trypsin (serine protease). In Solanum tuberosum (Potato), this protein is Serine protease inhibitor 8.